Here is a 291-residue protein sequence, read N- to C-terminus: 33 kDa chaperonin (291 aa).

Intrachain disulfides connect cysteine 237–cysteine 239 and cysteine 270–cysteine 273.

The protein belongs to the HSP33 family. Under oxidizing conditions two disulfide bonds are formed involving the reactive cysteines. Under reducing conditions zinc is bound to the reactive cysteines and the protein is inactive.

It is found in the cytoplasm. Its function is as follows. Redox regulated molecular chaperone. Protects both thermally unfolding and oxidatively damaged proteins from irreversible aggregation. Plays an important role in the bacterial defense system toward oxidative stress. In Bacillus anthracis (strain A0248), this protein is 33 kDa chaperonin.